A 384-amino-acid chain; its full sequence is 1-deoxy-D-xylulose 5-phosphate reductoisomerase (384 aa).

NADPH is bound by residues threonine 10, glycine 11, serine 12, isoleucine 13, glycine 36, and asparagine 123. Lysine 124 is a 1-deoxy-D-xylulose 5-phosphate binding site. Residue glutamate 125 coordinates NADPH. Aspartate 149 serves as a coordination point for Mn(2+). Residues serine 150, glutamate 151, serine 175, and histidine 198 each contribute to the 1-deoxy-D-xylulose 5-phosphate site. Glutamate 151 is a binding site for Mn(2+). Glycine 204 contacts NADPH. The 1-deoxy-D-xylulose 5-phosphate site is built by serine 211, asparagine 216, lysine 217, and glutamate 220. Position 220 (glutamate 220) interacts with Mn(2+).

Belongs to the DXR family. The cofactor is Mg(2+). It depends on Mn(2+) as a cofactor.

It catalyses the reaction 2-C-methyl-D-erythritol 4-phosphate + NADP(+) = 1-deoxy-D-xylulose 5-phosphate + NADPH + H(+). The protein operates within isoprenoid biosynthesis; isopentenyl diphosphate biosynthesis via DXP pathway; isopentenyl diphosphate from 1-deoxy-D-xylulose 5-phosphate: step 1/6. Catalyzes the NADPH-dependent rearrangement and reduction of 1-deoxy-D-xylulose-5-phosphate (DXP) to 2-C-methyl-D-erythritol 4-phosphate (MEP). The chain is 1-deoxy-D-xylulose 5-phosphate reductoisomerase from Chlorobium phaeovibrioides (strain DSM 265 / 1930) (Prosthecochloris vibrioformis (strain DSM 265)).